The following is a 395-amino-acid chain: Elongation factor Tu (395 aa).

Positions Lys10–Gln204 constitute a tr-type G domain. The tract at residues Gly19–Thr26 is G1. Gly19 to Thr26 contributes to the GTP binding site. Thr26 contributes to the Mg(2+) binding site. The interval Gly60–Ser64 is G2. A G3 region spans residues Asp81–Gly84. GTP-binding positions include Asp81–His85 and Asn136–Asp139. A G4 region spans residues Asn136–Asp139. The tract at residues Ser174–Leu176 is G5.

The protein belongs to the TRAFAC class translation factor GTPase superfamily. Classic translation factor GTPase family. EF-Tu/EF-1A subfamily. Monomer.

The protein resides in the cytoplasm. It catalyses the reaction GTP + H2O = GDP + phosphate + H(+). Its function is as follows. GTP hydrolase that promotes the GTP-dependent binding of aminoacyl-tRNA to the A-site of ribosomes during protein biosynthesis. This is Elongation factor Tu from Geobacillus stearothermophilus (Bacillus stearothermophilus).